Reading from the N-terminus, the 478-residue chain is Zinc metalloproteinase/disintegrin (478 aa).

A signal peptide spans 1-20 (MIQVLLVTICLAVFPYQGSS). The propeptide occupies 21–194 (KTLKSGNVND…KASQLNLTPE (174 aa)). A Pyrrolidone carboxylic acid modification is found at Q195. A Peptidase M12B domain is found at 201-397 (RYIELVIVAD…RNPQCILNQP (197 aa)). 2 residues coordinate Ca(2+): E204 and D288. Cystine bridges form between C312–C392, C352–C376, and C354–C359. H337 lines the Zn(2+) pocket. E338 is a catalytic residue. Zn(2+) contacts are provided by H341 and H347. C392 and N395 together coordinate Ca(2+). Positions 398-413 (LRTDTVSTPVSGNELL) are excised as a propeptide. A Disintegrin domain is found at 405 to 478 (TPVSGNELLQ…SDCPRNPYKD (74 aa)). 4 disulfides stabilise this stretch: C420-C443, C434-C440, C439-C464, and C452-C471. A Cell attachment site; atypical (VGD) motif is present at residues 456-458 (VGD).

Belongs to the venom metalloproteinase (M12B) family. P-II subfamily. P-IIe sub-subfamily. In terms of assembly, monomer (metalloproteinase). Heterodimer; disulfide-linked (disintegrin). Zn(2+) is required as a cofactor. As to expression, expressed by the venom gland.

The protein resides in the secreted. Fibrinolytic and caseinolytic activities are inhibited by Cd(2+), Cu(2+) and Co(2+) ions. Not inhibited by Mg(2+), Ca(2+) and Ba(2+). Also inhibited by EDTA, EGTA and 1,10-phenanthroline. Its function is as follows. Fibrinolytic and fibrinogenolytic metalloproteinase that hydrolyzes the Aalpha-chain and more slowly the Bbeta-chain of fibrin and fibrinogen. Its fibrinolytic activity is direct, without any plasminogen activation. Also hydrolyzes casein and B-chain of oxidized insulin. Inhibits ADP-induced and collagen-induced platelet aggregation. Shows low hemorrhagic activity. Cleaves the plasma proteinase inhibitors alpha(2)-macroglobulin (A2M) and pregnancy zone protein (PZP), and is inhibited by them. The metalloprotease has no strict P1-P1' specificity requirement. Hydrolysis at sites with a Pro residue at P1 is observed with bradykinin, substance P, PZP and alpha chain fibrinogen (FGA). Functionally, poor inhibitor of platelet aggregation. The disintegrin inhibits the adhesion of the alpha-4/beta-1 (ITGA4/ITGB1) integrin to VCAM-1. Inhibition on alpha-2b/beta-3 (ITGA2B/ITGB3) is low. This is Zinc metalloproteinase/disintegrin from Macrovipera lebetinus (Levantine viper).